Consider the following 527-residue polypeptide: Cytochrome P450 monooygenase 3 (527 aa).

A helical transmembrane segment spans residues 21-41 (IAVAFAALCGATGLLAFSWWI). Residue C473 coordinates heme.

Belongs to the cytochrome P450 family. Requires heme as cofactor.

It localises to the membrane. Its pathway is plant hormone biosynthesis; gibberellin biosynthesis. Its function is as follows. Gibberellin 13-hydroxylase; part of the gene cluster that mediates the biosynthesis of gibberellins (GAs), diterpenoids that may provide a selective advantage during infection of the preferred host plant, rice. Gibberellins (GAs) are diterpenoids and are synthesized via the mevalonate pathway. Biosynthesis of the major metabolite GA3 (gibberellic acid) from geranylgeranyl diphosphate (GGPP) requires 13 steps. The GGPP produced by the geranylgeranyl diphosphate synthase GGS2 is converted to ent-kaurene via ent-copalyldiphosphate in a two-step cyclization reaction performed by the bifunctional ent-copalyl diphosphate synthase/ent-kaurene synthase enzyme (CPS/KS). Ent-Kaurene is metabolized to GAs by a series of oxidation reactions catalyzed by cytochrome P450 monooxygenases. Cytochrome P450 monooxygenase P450-4 is an ent-kaurene oxidase that catalyzes the three oxidation steps between ent-kaurene and ent-kaurenoic acid. The highly multifunctional cytochrome P450 monooxygenase P450-1 then catalyzes four steps involving oxidation at two carbon atoms, in the main pathway from ent-kaurenoic acid to GA14 via GA12-aldehyde as well as producing kaurenolides and fujenoic acids as by-products. The cytochrome P450 monooxygenase P450-2 then converts GA14 to GA4 by removal of C-20. GA4 is further converted to GA7 by the GA4 desaturase DES via 1,2-desaturation before cytochrome P450 monooxygenase P450-3, a 13-hydroxylase, hydroxylates GA7 to GA3, the final product of the GA-biosynthetic pathway. The protein is Cytochrome P450 monooygenase 3 of Gibberella fujikuroi (strain CBS 195.34 / IMI 58289 / NRRL A-6831) (Bakanae and foot rot disease fungus).